A 559-amino-acid polypeptide reads, in one-letter code: Non-homologous end joining factor IFFO1 (559 aa).

The segment at 21–57 is disordered; sequence GPLGDSLGGDHFAGGGDLPPAPLSPAGPAAYSPPGPG. Residues 39–57 show a composition bias toward pro residues; the sequence is PPAPLSPAGPAAYSPPGPG. An LMNA binding region spans residues 65–116; the sequence is ALRNDLGSNINVLKTLNLRFRCFLAKVHELERRNRLLEKQLQQALEEGKQGR. Positions 73–526 constitute an IF rod domain; that stretch reads NINVLKTLNL…RLITQSGDRK (454 aa). A coiled-coil region spans residues 85-117; sequence RCFLAKVHELERRNRLLEKQLQQALEEGKQGRR. The interval 158 to 187 is disordered; that stretch reads SPARSPAGPLAPSAASLSSSSTSTSTTYSS. Positions 237-301 form a coiled coil; it reads EIRALYNVLA…LKVEQLKAEL (65 aa). The tract at residues 360 to 394 is disordered; sequence SMGGRKRERKAAVEEDTSLSESEGPRQPDGDEEES. The tract at residues 450-525 is XCCR4 binding. Required for localization to the double-strand breaks (DSBs); it reads EQEDSLEKVI…RRLITQSGDR (76 aa). Residues 455–501 adopt a coiled-coil conformation; that stretch reads LEKVIKDTESLFKTREKEYQETIDQIELELATAKNDMNRHLHEYMEM. The interval 520–559 is disordered; the sequence is TQSGDRKSPAFTAVPLSDPPPPPSEAEDSDRDVSSDSSMR. Residues 550–559 show a composition bias toward basic and acidic residues; that stretch reads RDVSSDSSMR.

The protein belongs to the intermediate filament family. Forms a heterotetramer with XRCC4. The interaction with XRCC4 is direct, involves LIG4-free XRCC4 and leads to relocalization of IFFO1 at the double-strand break (DSB) sites. Interacts with LMNA; the interaction forms an interior nucleoskeleton and the recruitment to DNA double-strand breaks. As to expression, ubiquitously expressed.

The protein localises to the nucleus. Its subcellular location is the nucleoplasm. It is found in the nucleus inner membrane. It localises to the nucleus matrix. Functionally, nuclear matrix protein involved in the immobilization of broken DNA ends and the suppression of chromosome translocation during DNA double-strand breaks (DSBs). Interacts with the nuclear lamina component LMNA, resulting in the formation of a nucleoskeleton that relocalizes to the DSB sites in a XRCC4-dependent manner and promotes the immobilization of the broken ends, thereby preventing chromosome translocation. Acts as a scaffold that allows the DNA repair protein XRCC4 and LMNA to assemble into a complex at the DSB sites. The chain is Non-homologous end joining factor IFFO1 from Homo sapiens (Human).